The primary structure comprises 102 residues: Protein S100-A11 (102 aa).

Position 2 is a phosphoserine (Ser2). Thr7 carries the phosphothreonine modification. EF-hand domains are found at residues 12–47 (ESLI…LAAF) and 52–87 (KDPG…LAVA). At Lys24 the chain carries N6-acetyllysine. The Ca(2+) site is built by Ser28, Thr30, Glu35, Asp65, Asn67, Asp69, Gln71, and Glu76.

It belongs to the S-100 family. In terms of assembly, homodimer; disulfide-linked. Post-translationally, phosphorylation at Thr-7 significantly suppresses homodimerization and promotes association with NCL/nucleolin which induces nuclear translocation. In terms of tissue distribution, smooth muscle and non-muscle tissues.

Its subcellular location is the cytoplasm. It localises to the nucleus. In terms of biological role, facilitates the differentiation and the cornification of keratinocytes. The chain is Protein S100-A11 (S100A11) from Oryctolagus cuniculus (Rabbit).